Reading from the N-terminus, the 351-residue chain is Ferrochelatase (351 aa).

Residues His-220 and Glu-301 each coordinate Fe cation.

This sequence belongs to the ferrochelatase family.

The protein localises to the cytoplasm. It carries out the reaction heme b + 2 H(+) = protoporphyrin IX + Fe(2+). Its pathway is porphyrin-containing compound metabolism; protoheme biosynthesis; protoheme from protoporphyrin-IX: step 1/1. Functionally, catalyzes the ferrous insertion into protoporphyrin IX. The polypeptide is Ferrochelatase (Rhodobacter capsulatus (Rhodopseudomonas capsulata)).